Reading from the N-terminus, the 283-residue chain is MSFTSRLKKELFIKAQNLVPQHQLSRVVGKVAASENPILKAAVIHAFKTKYGIDLSIAEQGNALKYKSFNDFFTRALKDGVRLVDENPDSIVSPADGAISQIGKITAGEVFQAKGQSFSVEKLIGDPQLAQPFQEGEFATVYLSPRDYHRVHMPFSGTLTETLYVPGELFSVNQVTAENVPGLFARNERMVCLFDTELGRMAVVLVGAMIVAGIETVATGKVKPSGRIELQHHELKLEKGAELGRFYLGSTAIILFEKDKIEWEKRFKAESVVVMGERMGHTI.

Catalysis depends on charge relay system; for autoendoproteolytic cleavage activity residues Asp96, His152, and Ser250. Ser250 acts as the Schiff-base intermediate with substrate; via pyruvic acid; for decarboxylase activity in catalysis. Pyruvic acid (Ser); by autocatalysis is present on Ser250.

The protein belongs to the phosphatidylserine decarboxylase family. PSD-B subfamily. Prokaryotic type I sub-subfamily. As to quaternary structure, heterodimer of a large membrane-associated beta subunit and a small pyruvoyl-containing alpha subunit. The cofactor is pyruvate. In terms of processing, is synthesized initially as an inactive proenzyme. Formation of the active enzyme involves a self-maturation process in which the active site pyruvoyl group is generated from an internal serine residue via an autocatalytic post-translational modification. Two non-identical subunits are generated from the proenzyme in this reaction, and the pyruvate is formed at the N-terminus of the alpha chain, which is derived from the carboxyl end of the proenzyme. The autoendoproteolytic cleavage occurs by a canonical serine protease mechanism, in which the side chain hydroxyl group of the serine supplies its oxygen atom to form the C-terminus of the beta chain, while the remainder of the serine residue undergoes an oxidative deamination to produce ammonia and the pyruvoyl prosthetic group on the alpha chain. During this reaction, the Ser that is part of the protease active site of the proenzyme becomes the pyruvoyl prosthetic group, which constitutes an essential element of the active site of the mature decarboxylase.

The protein resides in the cell membrane. It catalyses the reaction a 1,2-diacyl-sn-glycero-3-phospho-L-serine + H(+) = a 1,2-diacyl-sn-glycero-3-phosphoethanolamine + CO2. Its pathway is phospholipid metabolism; phosphatidylethanolamine biosynthesis; phosphatidylethanolamine from CDP-diacylglycerol: step 2/2. Functionally, catalyzes the formation of phosphatidylethanolamine (PtdEtn) from phosphatidylserine (PtdSer). The chain is Phosphatidylserine decarboxylase proenzyme from Acinetobacter baumannii (strain ACICU).